The sequence spans 808 residues: Glutamate receptor 1.1 (808 aa).

The signal sequence occupies residues 1–19 (MEILFSISILALLFSGVVA). The Extracellular portion of the chain corresponds to 20–541 (APSDDDVFEE…MWTFFDPFEK (522 aa)). Asparagine 288, asparagine 339, and asparagine 504 each carry an N-linked (GlcNAc...) asparagine glycan. Residues 542-562 (SLWLASGAFFVLTGIVVWLVE) form a helical membrane-spanning segment. Residues 563–570 (RSVNPEFQ) lie on the Cytoplasmic side of the membrane. The helical transmembrane segment at 571–591 (GSWGQQLSMMLWFGFSTIVFA) threads the bilayer. At 592–602 (HREKLQKMSSR) the chain is on the cytoplasmic side. Residues 603 to 623 (FLVIVWVFVVLILTSSYSANL) traverse the membrane as a helical segment. At 624-771 (TSTKTISRMQ…SKRFTFRELR (148 aa)) the chain is on the extracellular side. Residues 772-792 (GLFIIAGAAHVLVLALHLFHT) traverse the membrane as a helical segment. Residues 793 to 808 (RQEVSRLCTKLQSFYK) are Cytoplasmic-facing.

This sequence belongs to the glutamate-gated ion channel (TC 1.A.10.1) family. In terms of assembly, may form heteromers. Expressed predominantly in roots. First detected in the root-shoot junction, and later in lateral roots and at the margin of matures leaves.

The protein resides in the membrane. Its function is as follows. Glutamate-gated receptor that probably acts as a non-selective cation channel. Can transport sodium, potassium, and calcium ions. Functions as a carbon and nitrogen regulator and/or sensor that regulates carbon and nitrogen metabolism and distinct physiological process such as germination through the control of acid abscisic (ABA) biosynthesis. May be involved in light-signal transduction and calcium homeostasis via the regulation of calcium influx into cells. Seems required for the regulation of the abscisic acid (ABA) signaling pathway that modulates many aspects of plant physiology such as seed germination and response to drought (e.g. stomata opening). In Arabidopsis thaliana (Mouse-ear cress), this protein is Glutamate receptor 1.1 (GLR1.1).